Here is a 383-residue protein sequence, read N- to C-terminus: L-Ala-D/L-Glu epimerase (383 aa).

Residues arginine 68, tyrosine 94, and lysine 198–lysine 200 contribute to the substrate site. Positions 224, 251, and 276 each coordinate Mg(2+). Residues lysine 298, cysteine 326–threonine 328, and aspartate 348–aspartate 350 contribute to the substrate site.

This sequence belongs to the mandelate racemase/muconate lactonizing enzyme family. Requires Mg(2+) as cofactor.

It carries out the reaction L-alanyl-L-glutamate = L-alanyl-D-glutamate. Its function is as follows. Catalyzes the epimerization of L-Ala-D-Glu to L-Ala-L-Glu and may play a role in the metabolism of the murein peptide, of which L-Ala-D-Glu is a component. Is also able to catalyze the epimerization of L-Ala-D-Asp, L-Ala-L-Glu, L-Ala-L-Ser, L-Ala-L-Pro, L-Ala-L-L-Val, L-Ala-L-Thr, L-Ala-L-Leu, L-Ala-L-Ile and L-Gly-L-Glu (in vitro). This chain is L-Ala-D/L-Glu epimerase, found in Bacteroides thetaiotaomicron (strain ATCC 29148 / DSM 2079 / JCM 5827 / CCUG 10774 / NCTC 10582 / VPI-5482 / E50).